An 85-amino-acid polypeptide reads, in one-letter code: U4-theraphotoxin-Hhn1a (85 aa).

A signal peptide spans 1–22 (MKVTLIAILTCAAVLVLHTTAA). The propeptide occupies 23–48 (EELEAESQPMEVGMPDTELAAVDEER). Intrachain disulfides connect cysteine 52/cysteine 66, cysteine 56/cysteine 77, and cysteine 71/cysteine 82.

This sequence belongs to the neurotoxin 12 (Hwtx-2) family. 02 (Hwtx-2) subfamily. Monomer. As to expression, expressed by the venom gland.

It is found in the secreted. Its function is as follows. Neurotoxin active on both insects and mammals. The sequence is that of U4-theraphotoxin-Hhn1a from Cyriopagopus hainanus (Chinese bird spider).